We begin with the raw amino-acid sequence, 161 residues long: Putative pre-16S rRNA nuclease (161 aa).

It belongs to the YqgF nuclease family.

Its subcellular location is the cytoplasm. Its function is as follows. Could be a nuclease involved in processing of the 5'-end of pre-16S rRNA. The polypeptide is Putative pre-16S rRNA nuclease (Prochlorococcus marinus (strain MIT 9313)).